We begin with the raw amino-acid sequence, 129 residues long: DNA-directed RNA polymerase subunit omega (129 aa).

The disordered stretch occupies residues 76–100 (EVDEPEPEAVPMIASGDSSGGEDSD).

The protein belongs to the RNA polymerase subunit omega family. The RNAP catalytic core consists of 2 alpha, 1 beta, 1 beta' and 1 omega subunit. When a sigma factor is associated with the core the holoenzyme is formed, which can initiate transcription.

It catalyses the reaction RNA(n) + a ribonucleoside 5'-triphosphate = RNA(n+1) + diphosphate. In terms of biological role, promotes RNA polymerase assembly. Latches the N- and C-terminal regions of the beta' subunit thereby facilitating its interaction with the beta and alpha subunits. The polypeptide is DNA-directed RNA polymerase subunit omega (Xanthobacter autotrophicus (strain ATCC BAA-1158 / Py2)).